Reading from the N-terminus, the 384-residue chain is uncharacterized protein (384 aa).

Helical transmembrane passes span 22–42 (LAFF…PFAK), 52–72 (LGLL…LTGV), 81–101 (AVIL…VLMN), 106–126 (MAIA…AMNI), 143–163 (FHGL…ALLW), 164–184 (LGLN…ILLL), 202–222 (LFVF…VMFL), 240–260 (GMSP…MTLG), 276–296 (VLLG…SIDS), 299–319 (AAII…PILF), 327–347 (VMPA…GILA), and 352–372 (IGFI…ALLL).

Belongs to the major facilitator superfamily.

It is found in the membrane. This is an uncharacterized protein from Yersinia pestis.